The chain runs to 202 residues: Glycerol-3-phosphate acyltransferase 1 (202 aa).

A run of 5 helical transmembrane segments spans residues 8-28, 85-105, 122-142, 146-166, and 173-190; these read AGMI…MSTG, LSLT…IWPL, ILVV…FVLA, QFTL…LIMA, and AGLA…RKNI.

It belongs to the PlsY family. In terms of assembly, probably interacts with PlsX.

Its subcellular location is the cell membrane. The enzyme catalyses an acyl phosphate + sn-glycerol 3-phosphate = a 1-acyl-sn-glycero-3-phosphate + phosphate. It participates in lipid metabolism; phospholipid metabolism. In terms of biological role, catalyzes the transfer of an acyl group from acyl-phosphate (acyl-PO(4)) to glycerol-3-phosphate (G3P) to form lysophosphatidic acid (LPA). This enzyme utilizes acyl-phosphate as fatty acyl donor, but not acyl-CoA or acyl-ACP. This is Glycerol-3-phosphate acyltransferase 1 from Desulfitobacterium hafniense (strain Y51).